The primary structure comprises 357 residues: Peptide chain release factor 1 (357 aa).

Glutamine 234 is subject to N5-methylglutamine.

The protein belongs to the prokaryotic/mitochondrial release factor family. Post-translationally, methylated by PrmC. Methylation increases the termination efficiency of RF1.

The protein resides in the cytoplasm. Functionally, peptide chain release factor 1 directs the termination of translation in response to the peptide chain termination codons UAG and UAA. This is Peptide chain release factor 1 from Arthrobacter sp. (strain FB24).